Here is a 685-residue protein sequence, read N- to C-terminus: DNA-directed RNA polymerase subunit beta' (685 aa).

Zn(2+)-binding residues include cysteine 69, cysteine 71, cysteine 87, and cysteine 90. Positions 492, 494, and 496 each coordinate Mg(2+).

Belongs to the RNA polymerase beta' chain family. RpoC1 subfamily. In terms of assembly, in plastids the minimal PEP RNA polymerase catalytic core is composed of four subunits: alpha, beta, beta', and beta''. When a (nuclear-encoded) sigma factor is associated with the core the holoenzyme is formed, which can initiate transcription. Mg(2+) serves as cofactor. It depends on Zn(2+) as a cofactor.

It localises to the plastid. It is found in the chloroplast. The catalysed reaction is RNA(n) + a ribonucleoside 5'-triphosphate = RNA(n+1) + diphosphate. Its function is as follows. DNA-dependent RNA polymerase catalyzes the transcription of DNA into RNA using the four ribonucleoside triphosphates as substrates. The polypeptide is DNA-directed RNA polymerase subunit beta' (Dioscorea elephantipes (Elephant's foot yam)).